A 350-amino-acid chain; its full sequence is MNMDTNDKEKKNEGIDPAKLKQLNLAVDALEKQFGKGAIMRLGDGSAVMQVQSISTGSMTLDFALGVGGLPRGRVAEIYGPESSGKTTLALHVIAEAQKEGGIAAIVDAEHAFDPSYARKLGVDINALLISQPESGEQALTIVETLVRSGAVDVVVVDSVAALVPQAELEGEMGDSVVGLQARLMSQALRKLTGAISKSSAVCIFINQLRDKIGVMYGSPETTTGGKALKFYASIRLDIRKIAQIKDGDEIVGNRTKVKVVKNKVAPPFKSAEFDILYGEGISAMGELVDLAVEFGVVKKSGSWFSFGQEKLGQGRESAKKALREDHALFQQVYIQVRELMTGTAEIING.

80-87 contacts ATP; it reads GPESSGKT.

The protein belongs to the RecA family.

Its subcellular location is the cytoplasm. Functionally, can catalyze the hydrolysis of ATP in the presence of single-stranded DNA, the ATP-dependent uptake of single-stranded DNA by duplex DNA, and the ATP-dependent hybridization of homologous single-stranded DNAs. It interacts with LexA causing its activation and leading to its autocatalytic cleavage. The sequence is that of Protein RecA from Chlorobium limicola (strain DSM 245 / NBRC 103803 / 6330).